The following is a 249-amino-acid chain: Phosphate import ATP-binding protein PstB 3 (249 aa).

Positions 4-244 (LVINNLDLYY…PQDERTENYI (241 aa)) constitute an ABC transporter domain. 36–43 (GPSGCGKS) contributes to the ATP binding site.

The protein belongs to the ABC transporter superfamily. Phosphate importer (TC 3.A.1.7) family. In terms of assembly, the complex is composed of two ATP-binding proteins (PstB), two transmembrane proteins (PstC and PstA) and a solute-binding protein (PstS).

Its subcellular location is the cell membrane. It catalyses the reaction phosphate(out) + ATP + H2O = ADP + 2 phosphate(in) + H(+). In terms of biological role, part of the ABC transporter complex PstSACB involved in phosphate import. Responsible for energy coupling to the transport system. The protein is Phosphate import ATP-binding protein PstB 3 of Streptococcus agalactiae serotype Ia (strain ATCC 27591 / A909 / CDC SS700).